Consider the following 509-residue polypeptide: ATP synthase subunit alpha (509 aa).

169–176 is an ATP binding site; sequence GDRQTGKT.

This sequence belongs to the ATPase alpha/beta chains family. As to quaternary structure, F-type ATPases have 2 components, CF(1) - the catalytic core - and CF(0) - the membrane proton channel. CF(1) has five subunits: alpha(3), beta(3), gamma(1), delta(1), epsilon(1). CF(0) has three main subunits: a(1), b(2) and c(9-12). The alpha and beta chains form an alternating ring which encloses part of the gamma chain. CF(1) is attached to CF(0) by a central stalk formed by the gamma and epsilon chains, while a peripheral stalk is formed by the delta and b chains.

The protein resides in the cell inner membrane. The enzyme catalyses ATP + H2O + 4 H(+)(in) = ADP + phosphate + 5 H(+)(out). Functionally, produces ATP from ADP in the presence of a proton gradient across the membrane. The alpha chain is a regulatory subunit. This is ATP synthase subunit alpha from Methylorubrum extorquens (strain CM4 / NCIMB 13688) (Methylobacterium extorquens).